The chain runs to 247 residues: Adenosine 5'-phosphosulfate reductase (247 aa).

[4Fe-4S] cluster is bound by residues Cys-133, Cys-134, Cys-216, and Cys-219. The interval 222 to 247 (KPAPGSDPRSGRWAGASKTECGLHAS) is disordered. Cys-242 serves as the catalytic Nucleophile; cysteine thiosulfonate intermediate.

This sequence belongs to the PAPS reductase family. CysH subfamily. It depends on [4Fe-4S] cluster as a cofactor.

The protein localises to the cytoplasm. The enzyme catalyses [thioredoxin]-disulfide + sulfite + AMP + 2 H(+) = adenosine 5'-phosphosulfate + [thioredoxin]-dithiol. Its pathway is sulfur metabolism; hydrogen sulfide biosynthesis; sulfite from sulfate. Its function is as follows. Catalyzes the formation of sulfite from adenosine 5'-phosphosulfate (APS) using thioredoxin as an electron donor. The polypeptide is Adenosine 5'-phosphosulfate reductase (Rhodococcus erythropolis (strain PR4 / NBRC 100887)).